A 319-amino-acid polypeptide reads, in one-letter code: MMVLRVEELVTGKKNSNGAAGEFLPGEFRNGEYEAAVALEKQEDLKTLPANSVKQGEEQRKSEKLREAELKKKKLEQRSKLENLEDLEIIVQLKKRKKYKKTKVPVVKEPEPEIMTEPVDVPRFLKAALENKLPVVEKFLSDKNSPDVCDEYKRTALHRACLEGHLAIVEKLMEAGAQIEFRDMLESTAIHWACRGGNADVLKLLLNKGAKISARDKLLSTALHVAVRTGHYECAEHLIACEADLNAKDREGDTPLHDAVRLNRYKMIRLLMTFGADLKVKNCAGKTPMDLVLHWQSGTKAIFDSLKENAYKNSRIATF.

Residues 46–65 (KTLPANSVKQGEEQRKSEKL) form a disordered region. Positions 53–89 (VKQGEEQRKSEKLREAELKKKKLEQRSKLENLEDLEI) form a coiled coil. Basic and acidic residues predominate over residues 55-65 (QGEEQRKSEKL). ANK repeat units follow at residues 152 to 181 (YKRT…QIEF), 185 to 214 (LEST…KISA), 218 to 247 (LLST…DLNA), 251 to 280 (EGDT…DLKV), and 284 to 315 (AGKT…KNSR).

As to quaternary structure, interacts with TTN/titin and YBX1. In terms of tissue distribution, expressed in heart, cardiac muscle.

The protein resides in the nucleus. Its function is as follows. May play an important role in endothelial cell activation. May act as a nuclear transcription factor that negatively regulates the expression of cardiac genes. The chain is Ankyrin repeat domain-containing protein 1 (Ankrd1) from Mus musculus (Mouse).